Consider the following 298-residue polypeptide: MTDAAVSFAKDFLAGGVAAAISKTAVAPIERVKLLLQVQHASKQITADKQYKGIIDCVVRIPKEQGVLSFWRGNLANVIRYFPTQALNFAFKDKYKQIFLGGVDKRTQFWRYFAGNLASGGAAGATSLCFVYPLDFARTRLAADVGKAGAEREFRGLGDCLVKIYKSDGIRGLYQGFNVSVQGIIIYRAAYFGIYDTAKGMLPDPKNTHIFISWMIAQSVTAVAGLTSYPFDTVRRRMMMQSGRKGTDIMYTGTLDCWRKIARDEGAKAFFKGAWSNVLRGMGGAFVLVLYDEIKKFT.

An N-acetylmethionine modification is found at Met-1. The Mitochondrial intermembrane segment spans residues 1-7 (MTDAAVS). Thr-2 is subject to N-acetylthreonine; in ADP/ATP translocase 2, N-terminally processed. Residues 6–98 (VSFAKDFLAG…FAFKDKYKQI (93 aa)) form a Solcar 1 repeat. Position 7 is a phosphoserine (Ser-7). Residues 8-37 (FAKDFLAGGVAAAISKTAVAPIERVKLLLQ) traverse the membrane as a helical segment. Lys-23 bears the N6-malonyllysine mark. At 38-74 (VQHASKQITADKQYKGIIDCVVRIPKEQGVLSFWRGN) the chain is on the mitochondrial matrix side. Residue Lys-43 is modified to N6-succinyllysine. Lys-52 carries the N6,N6,N6-trimethyllysine; alternate modification. Residue Lys-52 is modified to N6,N6-dimethyllysine; alternate. Lys-52 carries the post-translational modification N6-methyllysine; alternate. A helical membrane pass occupies residues 75 to 99 (LANVIRYFPTQALNFAFKDKYKQIF). Arg-80 and Lys-92 together coordinate ADP. An N6-malonyllysine mark is found at Lys-92 and Lys-96. Over 100–109 (LGGVDKRTQF) the chain is Mitochondrial intermembrane. At Lys-105 the chain carries N6-acetyllysine; alternate. Position 105 is an N6-succinyllysine; alternate (Lys-105). A helical transmembrane segment spans residues 110-130 (WRYFAGNLASGGAAGATSLCF). Solcar repeat units follow at residues 111–201 (RYFA…AKGM) and 212–297 (ISWM…IKKF). At 131–178 (VYPLDFARTRLAADVGKAGAEREFRGLGDCLVKIYKSDGIRGLYQGFN) the chain is on the mitochondrial matrix side. At Lys-147 the chain carries N6-methyllysine; alternate. The residue at position 147 (Lys-147) is an N6-acetyllysine; alternate. Lys-147 bears the N6-succinyllysine; alternate mark. Lys-147 is modified (N6-malonyllysine; alternate). 2 positions are modified to N6-acetyllysine: Lys-163 and Lys-166. The helical transmembrane segment at 179–199 (VSVQGIIIYRAAYFGIYDTAK) threads the bilayer. Residues 200 to 210 (GMLPDPKNTHI) are Mitochondrial intermembrane-facing. Residues 211-231 (FISWMIAQSVTAVAGLTSYPF) traverse the membrane as a helical segment. The Mitochondrial matrix segment spans residues 232–273 (DTVRRRMMMQSGRKGTDIMYTGTLDCWRKIARDEGAKAFFKG). Residue Arg-235 coordinates ADP. The important for transport activity stretch occupies residues 235 to 240 (RRRMMM). The Nucleotide carrier signature motif motif lies at 235-240 (RRRMMM). The residue at position 268 (Lys-268) is an N6-acetyllysine; alternate. Position 268 is an N6-succinyllysine; alternate (Lys-268). A helical transmembrane segment spans residues 274–291 (AWSNVLRGMGGAFVLVLY). Residues 292-298 (DEIKKFT) are Mitochondrial intermembrane-facing.

The protein belongs to the mitochondrial carrier (TC 2.A.29) family. Monomer. Component of the MMXD complex, which includes CIAO1, ERCC2, CIAO2B, MMS19 and SLC25A5/ANT2. Interacts with AK4. Interacts with TIMM44; leading to inhibit the presequence translocase TIMM23, thereby promoting stabilization of PINK1. In terms of processing, trimethylated by ANTKMT at Lys-52.

It localises to the mitochondrion inner membrane. Its subcellular location is the membrane. It carries out the reaction ADP(in) + ATP(out) = ADP(out) + ATP(in). It catalyses the reaction H(+)(in) = H(+)(out). With respect to regulation, the matrix-open state (m-state) is inhibited by the membrane-permeable bongkrekic acid (BKA). The cytoplasmic-open state (c-state) is inhibited by the membrane-impermeable toxic inhibitor carboxyatractyloside (CATR). Proton transporter activity is inhibited by ADP:ATP antiporter activity. Its function is as follows. ADP:ATP antiporter that mediates import of ADP into the mitochondrial matrix for ATP synthesis, and export of ATP out to fuel the cell. Cycles between the cytoplasmic-open state (c-state) and the matrix-open state (m-state): operates by the alternating access mechanism with a single substrate-binding site intermittently exposed to either the cytosolic (c-state) or matrix (m-state) side of the inner mitochondrial membrane. In addition to its ADP:ATP antiporter activity, also involved in mitochondrial uncoupling and mitochondrial permeability transition pore (mPTP) activity. Plays a role in mitochondrial uncoupling by acting as a proton transporter: proton transport uncouples the proton flows via the electron transport chain and ATP synthase to reduce the efficiency of ATP production and cause mitochondrial thermogenesis. Proton transporter activity is inhibited by ADP:ATP antiporter activity, suggesting that SLC25A5/ANT2 acts as a master regulator of mitochondrial energy output by maintaining a delicate balance between ATP production (ADP:ATP antiporter activity) and thermogenesis (proton transporter activity). Proton transporter activity requires free fatty acids as cofactor, but does not transport it. Probably mediates mitochondrial uncoupling in tissues that do not express UCP1. Also plays a key role in mPTP opening, a non-specific pore that enables free passage of the mitochondrial membranes to solutes of up to 1.5 kDa, and which contributes to cell death. It is however unclear if SLC25A5/ANT2 constitutes a pore-forming component of mPTP or regulates it. Acts as a regulator of mitophagy independently of ADP:ATP antiporter activity: promotes mitophagy via interaction with TIMM44, leading to inhibit the presequence translocase TIMM23, thereby promoting stabilization of PINK1. As part of the mitotic spindle-associated MMXD complex it may play a role in chromosome segregation. The sequence is that of ADP/ATP translocase 2 from Bos taurus (Bovine).